The following is a 293-amino-acid chain: G1/S-specific cyclin-D3 (293 aa).

The Cyclin N-terminal domain maps to 27–152 (VLQSLLRLEE…LVLGKLKWDL (126 aa)). Residues 257 to 293 (REAAQTAPSPVPKAPGGSSSQGPSQTSTPTDVTAIHL) form a disordered region. 2 positions are modified to phosphoserine: serine 265 and serine 280. Low complexity predominate over residues 271 to 286 (PGGSSSQGPSQTSTPT). Threonine 284 bears the Phosphothreonine mark.

The protein belongs to the cyclin family. Cyclin D subfamily. As to quaternary structure, interacts with the CDK4 and CDK6 protein kinases to form a serine/threonine kinase holoenzyme complex. The cyclin subunit imparts substrate specificity to the complex. Interacts with ATF5. Interacts with EIF3K. Component of the ternary complex cyclin D/CDK4/CDKN1B required for nuclear translocation and modulation of CDK4-mediated kinase activity. Can form similar complexes with either CDKN1A or CDKN2A. In terms of processing, phosphorylation at Thr-284 by MAP kinases is required for ubiquitination and degradation by the DCX(AMBRA1) complex. Post-translationally, ubiquitinated by the DCX(AMBRA1) complex during the transition from G1 to S cell phase, leading to its degradation: ubiquitination is dependent on Thr-284 phosphorylation. The DCX(AMBRA1) complex represents the major regulator of CCND3 stability during the G1/S transition. Polyubiquitinated by the SCF(FBXL2) complex, leading to proteasomal degradation.

Its subcellular location is the nucleus. The protein localises to the cytoplasm. Its function is as follows. Regulatory component of the cyclin D3-CDK4 (DC) complex that phosphorylates and inhibits members of the retinoblastoma (RB) protein family including RB1 and regulates the cell-cycle during G(1)/S transition. Phosphorylation of RB1 allows dissociation of the transcription factor E2F from the RB/E2F complex and the subsequent transcription of E2F target genes which are responsible for the progression through the G(1) phase. Hypophosphorylates RB1 in early G(1) phase. Cyclin D-CDK4 complexes are major integrators of various mitogenenic and antimitogenic signals. Component of the ternary complex, cyclin D3/CDK4/CDKN1B, required for nuclear translocation and activity of the cyclin D-CDK4 complex. Shows transcriptional coactivator activity with ATF5 independently of CDK4. This chain is G1/S-specific cyclin-D3, found in Rattus norvegicus (Rat).